Consider the following 189-residue polypeptide: UPF0301 protein RC0043 (189 aa).

Belongs to the UPF0301 (AlgH) family.

The chain is UPF0301 protein RC0043 from Rickettsia conorii (strain ATCC VR-613 / Malish 7).